The following is a 176-amino-acid chain: ATP synthase subunit b (176 aa).

The chain crosses the membrane as a helical span at residues 27-47 (FFVFSFLTLILVVTIVTLLVY).

Belongs to the ATPase B chain family. F-type ATPases have 2 components, F(1) - the catalytic core - and F(0) - the membrane proton channel. F(1) has five subunits: alpha(3), beta(3), gamma(1), delta(1), epsilon(1). F(0) has three main subunits: a(1), b(2) and c(10-14). The alpha and beta chains form an alternating ring which encloses part of the gamma chain. F(1) is attached to F(0) by a central stalk formed by the gamma and epsilon chains, while a peripheral stalk is formed by the delta and b chains.

Its subcellular location is the cell membrane. Functionally, f(1)F(0) ATP synthase produces ATP from ADP in the presence of a proton or sodium gradient. F-type ATPases consist of two structural domains, F(1) containing the extramembraneous catalytic core and F(0) containing the membrane proton channel, linked together by a central stalk and a peripheral stalk. During catalysis, ATP synthesis in the catalytic domain of F(1) is coupled via a rotary mechanism of the central stalk subunits to proton translocation. In terms of biological role, component of the F(0) channel, it forms part of the peripheral stalk, linking F(1) to F(0). The polypeptide is ATP synthase subunit b (Metamycoplasma arthritidis (strain 158L3-1) (Mycoplasma arthritidis)).